The chain runs to 755 residues: Zinc transporter ZIP6 (755 aa).

A signal peptide spans 1–28; that stretch reads MARKLSVILILTFALSVTNPLHELKAAA. At 29 to 325 the chain is on the extracellular side; that stretch reads FPQTTEKISP…PKTYSLQIAW (297 aa). N-linked (GlcNAc...) asparagine glycosylation occurs at N67. Residues 95-128 are compositionally biased toward basic and acidic residues; the sequence is DHDHHSDHEHHSDHERHSDHEHHSEHEHHSDHDH. Disordered regions lie at residues 95–186 and 202–246; these read DHDH…SASE and LETI…SVSE. Residues 129-144 are compositionally biased toward basic residues; that stretch reads HSHHNHAASGKNKRKA. Composition is skewed to basic and acidic residues over residues 145–159 and 167–179; these read LCPD…KDPR and HRPE…RNVK. Residues 219–234 show a composition bias toward low complexity; it reads SSSTPPSVTSKSRVSR. N-linked (GlcNAc...) asparagine glycosylation is found at N241, N266, and N283. The chain crosses the membrane as a helical span at residues 326 to 346; the sequence is VGGFIAISIISFLSLLGVILV. Residues 347–355 lie on the Cytoplasmic side of the membrane; the sequence is PLMNRVFFK. Residues 356 to 376 form a helical membrane-spanning segment; the sequence is FLLSFLVALAVGTLSGDAFLH. The Extracellular segment spans residues 377–423; sequence LLPHSHASHHHSHSHEEPAMEMKRGPLFSHLSSQNIEESAYFDSTWK. The chain crosses the membrane as a helical span at residues 424-444; the sequence is GLTALGGLYFMFLVEHVLTLI. The Cytoplasmic segment spans residues 445 to 657; it reads KQFKDKKKKN…LKAGMTVKQA (213 aa). The stretch at 464–480 forms a coiled coil; the sequence is VEIKKQLSKYESQLSTN. Phosphoserine occurs at positions 471 and 478. A helical membrane pass occupies residues 658 to 678; the sequence is VLYNALSAMLAYLGMATGIFI. At 679-686 the chain is on the extracellular side; it reads GHYAENVS. N684 carries an N-linked (GlcNAc...) asparagine glycan. Residues 687 to 707 form a helical membrane-spanning segment; it reads MWIFALTAGLFMYVALVDMVP. Over 708–724 the chain is Cytoplasmic; it reads EMLHNDASDHGCSRWGY. A helical transmembrane segment spans residues 725 to 745; the sequence is FFLQNAGMLLGFGIMLLISIF. The Extracellular segment spans residues 746–755; the sequence is EHKIVFRINF.

The protein belongs to the ZIP transporter (TC 2.A.5) family. Interacts with SLC39A10; which triggers cells to undergo EMT and mitosis. Found in a complex with SLC39A6, SLC39A10 and with the 'Ser-727' phosphorylated form of STAT3 throughout mitosis. Found in a complex with SLC39A6, SLC39A10 and with NCAM1; this complex controls NCAM1 phosphorylation and integration into focal adhesion complexes during epithelial-to-mesenchymal transition (EMT). Found in a complex with SLC39A6, SLC39A10 and with GSK3B that controls NCAM1 phosphorylation. Cleaved on the N-terminus before locating to the plasma membrane. Post-translationally, N-glycosylated. In terms of processing, phosphorylated by ZAP70 in response to TCR stimulation leading to its activation. In terms of tissue distribution, highly expressed in the breast, prostate, placenta, kidney, pituitary and corpus callosum. Weakly expressed in heart and intestine. Also highly expressed in cells derived from an adenocarcinoma of the cervix and lung carcinoma.

It localises to the cell membrane. The protein resides in the cell projection. It is found in the lamellipodium membrane. Its subcellular location is the membrane raft. The protein localises to the apical cell membrane. The catalysed reaction is Zn(2+)(in) = Zn(2+)(out). Its function is as follows. Zinc-influx transporter which plays a role in zinc homeostasis and in the induction of epithelial-to-mesenchymal transition (EMT). When associated with SLC39A10, the heterodimer formed by SLC39A10 and SLC39A6 mediates cellular zinc uptake to trigger cells to undergo epithelial- to-mesenchymal transition (EMT). The SLC39A10-SLC39A6 heterodimer also controls NCAM1 phosphorylation and its integration into focal adhesion complexes during EMT. Zinc influx inactivates GSK3B, enabling unphosphorylated SNAI1 in the nucleus to down-regulate adherence genes such as CDH1, causing loss of cell adherence. In addition, the SLC39A10-SLC39A6 heterodimer plays an essentiel role in initiating mitosis by importing zinc into cells to initiate a pathway resulting in the onset of mitosis. Participates in the T-cell receptor signaling regulation by mediating cellular zinc uptake into activated lymphocytes. Regulates the zinc influx necessary for proper meiotic progression to metaphase II (MII) that allows the oocyte-to-egg transition. This Homo sapiens (Human) protein is Zinc transporter ZIP6.